The following is a 524-amino-acid chain: Calcium-dependent protein kinase 1 (524 aa).

The disordered stretch occupies residues 1–34; that stretch reads MGCSQSSNVKDFKTRRSKFTNGNNYGKSGNNKNS. Gly2 carries N-myristoyl glycine lipidation. Cys3 is lipidated: S-palmitoyl cysteine. The Basic cluster involved in membrane binding signature appears at 10–20; the sequence is KDFKTRRSKFT. Residues Ser17, Ser28, and Ser34 each carry the phosphoserine; by autocatalysis modification. Positions 21 to 32 are enriched in low complexity; that stretch reads NGNNYGKSGNNK. One can recognise a Protein kinase domain in the interval 56 to 325; the sequence is YFKVRKLGSG…AKEALNSKWI (270 aa). Residues 62-70 and Lys85 contribute to the ATP site; that span reads LGSGAYGEV. Ser64 is modified (phosphoserine; by PKG; by autocatalysis). Residue Thr100 is modified to Phosphothreonine; by autocatalysis. Ser118 bears the Phosphoserine; by autocatalysis mark. Asp191 acts as the Proton acceptor in catalysis. Ser217 is modified (phosphoserine). Position 220 is a phosphoserine; by autocatalysis (Ser220). Thr231 carries the post-translational modification Phosphothreonine; by PKG; by autocatalysis. Ser335 is modified (phosphoserine; by autocatalysis). The J domain autoinhibitory motif signature appears at 346 to 353; that stretch reads NMRKFEGS. A j domain region spans residues 346–364; sequence NMRKFEGSQKLAQAAILFI. Residues 354-364 carry the J domain interacts with the EF-hand domains motif; sequence QKLAQAAILFI. EF-hand domains are found at residues 372–407, 416–451, 452–487, and 488–521; these read EERKELTDIFKKLDKNGDGQLDKKELIEGYNILRSF, NVEEEVDNILKEVDFDKNGYIEYSEFISVCMDKQIL, FSEERLRDAFNLFDTDKSGKITKEELANLFGLTSIS, and EQMWNEVLGEADKNKDNMIDFDEFVNMMHKICDN. 20 residues coordinate Ca(2+): Asp385, Asn387, Asp389, Gln391, Glu396, Asp429, Asp431, Asn433, Tyr435, Glu440, Asp465, Asp467, Ser469, Lys471, Glu476, Asp499, Asn501, Asp503, Met505, and Glu510.

The protein belongs to the protein kinase superfamily. Ser/Thr protein kinase family. CDPK subfamily. Monomer. Forms a high molecular weight (250 and 400 kDa) complex. Forms a complex composed of CDPK1, PKA regulatory subunit PKAr and 14-3-3I; the complex is formed in merozoites in response to low extracellular level of K(+) and may play a role in microneme secretion. Interacts (when phosphorylated) with 14-3-3I in a Ca(2+)-independent manner; the interaction does not regulate CDPK1 catalytic activity but is required for merozoite invasion of host erythrocytes. Interacts with PKA regulatory subunit PKAr; in a Ca(2+)-dependent manner. Interacts with SERA5 p50 in the late schizont stage. Interacts with inner membrane complex protein IMC1g in late schizonts. Interacts with rhoptry protein RhopH3 in merozoites. Requires Mg(2+) as cofactor. Myristoylated. Myristoylation, palmitoylation and the basic cluster motif are required for the localization to the parasitophorous vacuole membrane. Post-translationally, palmitoylated. Palmitoylation increases in merozoites in response to low level of extracellular K(+) in the host blood. Myristoylation, palmitoylation and the basic cluster motif are required for the localization to the parasitophorous vacuole membrane. In terms of processing, phosphorylation at Ser-64 occurs at late schizont stage and regulates CDPK1 protein-protein interaction. Phosphorylated at Ser-28, Ser-34 and Ser-64 in merozoites in response to low extracellular level of K(+). Phosphorylation at Thr-231 may regulate CDPK1 kinase activity. Phosphorylation increases in response to an increase in intracellular Ca(2+) levels. Autophosphorylated in vitro. Autophosphorylation does not affect membrane localization in vitro.

Its subcellular location is the membrane. The protein localises to the cell membrane. The protein resides in the parasitophorous vacuole membrane. It localises to the cytoplasm. It is found in the cell projection. Its subcellular location is the cilium. The protein localises to the flagellum. The protein resides in the host cell membrane. It carries out the reaction L-seryl-[protein] + ATP = O-phospho-L-seryl-[protein] + ADP + H(+). It catalyses the reaction L-threonyl-[protein] + ATP = O-phospho-L-threonyl-[protein] + ADP + H(+). With respect to regulation, activated by calcium. Upon calcium binding to the EF-hand domains, the C-terminus of the junction domain (J domain) undergoes a conformational change which results in the dissociation of the pseudo-substrate inhibitory motif from the catalytic domain. This, in turn may facilitate the autophosphorylation of the activation loop at Thr-231, which leads to the kinase activation. May be negatively regulated by PKA-mediated phosphorylation. Inhibited by purfalcamine. Its function is as follows. Calcium-dependent protein kinase which acts as a sensor and effector of intracellular Ca(2+) levels probably in part downstream of cGMP-activated PKG kinase. By phosphorylating various proteins, required for microneme secretion and thus merozoite egress from and invasion of host erythrocytes. During gametogenesis, essential for the development of both male and female gametes. Phosphorylates SERA5 p50 which enhances SERA5 p50 protease activity; however, SERA5 p50 protease activity has been shown in other studies to be controversial. Probably by phosphorylating SERA5 p50, plays a role in merozoite egress from host erythrocytes. Probably prior or during merozoite invasion of host erythrocytes, phosphorylates rhoptry protein RhopH3 which is required for RhopH3 localization to rhoptries and for its secretion. Probably in late schizonts, phosphorylates myosin A tail domain-interacting protein MTIP and glideosome-associated protein 45 GAP45, both of which are components of the motor complex that generates the force required by the parasite to invade host cells. In late schizonts, phosphorylates inner membrane complex protein IMC1g. In late schizonts, phosphorylates PKA regulatory subunit PKAr in a calcium-dependent manner, which may contribute to the dissociation of regulatory PKAr and catalytic PKAc subunits and promote the activation of PKAc. May phosphorylate raf kinase inhibitory protein RKIP which in turn may regulate CDPK1 catalytic activity. May phosphorylate proteins of the host erythrocyte membranes. The chain is Calcium-dependent protein kinase 1 from Plasmodium falciparum (isolate 3D7).